Consider the following 218-residue polypeptide: ATP phosphoribosyltransferase (218 aa).

The protein belongs to the ATP phosphoribosyltransferase family. Short subfamily. In terms of assembly, heteromultimer composed of HisG and HisZ subunits.

The protein resides in the cytoplasm. The catalysed reaction is 1-(5-phospho-beta-D-ribosyl)-ATP + diphosphate = 5-phospho-alpha-D-ribose 1-diphosphate + ATP. Its pathway is amino-acid biosynthesis; L-histidine biosynthesis; L-histidine from 5-phospho-alpha-D-ribose 1-diphosphate: step 1/9. Its function is as follows. Catalyzes the condensation of ATP and 5-phosphoribose 1-diphosphate to form N'-(5'-phosphoribosyl)-ATP (PR-ATP). Has a crucial role in the pathway because the rate of histidine biosynthesis seems to be controlled primarily by regulation of HisG enzymatic activity. This is ATP phosphoribosyltransferase from Acaryochloris marina (strain MBIC 11017).